The sequence spans 332 residues: Anthranilate phosphoribosyltransferase (332 aa).

5-phospho-alpha-D-ribose 1-diphosphate-binding positions include G78, 81–82 (GD), S86, 88–91 (NIST), 106–114 (KHGNKSITS), and S118. An anthranilate-binding site is contributed by G78. Residue S90 coordinates Mg(2+). N109 contributes to the anthranilate binding site. R163 is a binding site for anthranilate. Mg(2+) is bound by residues D222 and E223.

It belongs to the anthranilate phosphoribosyltransferase family. Homodimer. The cofactor is Mg(2+).

The enzyme catalyses N-(5-phospho-beta-D-ribosyl)anthranilate + diphosphate = 5-phospho-alpha-D-ribose 1-diphosphate + anthranilate. The protein operates within amino-acid biosynthesis; L-tryptophan biosynthesis; L-tryptophan from chorismate: step 2/5. Functionally, catalyzes the transfer of the phosphoribosyl group of 5-phosphorylribose-1-pyrophosphate (PRPP) to anthranilate to yield N-(5'-phosphoribosyl)-anthranilate (PRA). The sequence is that of Anthranilate phosphoribosyltransferase from Staphylococcus aureus (strain Mu3 / ATCC 700698).